The following is a 159-amino-acid chain: Ascorbate-specific PTS system EIIA component (159 aa).

In terms of domain architecture, PTS EIIA type-2 spans 9 to 152; sequence VLKQHHTVRL…TSLFAVIDRV (144 aa). H71 serves as the catalytic Tele-phosphohistidine intermediate. H71 is modified (phosphohistidine).

It localises to the cytoplasm. Functionally, the phosphoenolpyruvate-dependent sugar phosphotransferase system (sugar PTS), a major carbohydrate active transport system, catalyzes the phosphorylation of incoming sugar substrates concomitantly with their translocation across the cell membrane. The enzyme II UlaABC PTS system is involved in ascorbate transport. This chain is Ascorbate-specific PTS system EIIA component (ulaC), found in Mycoplasma pneumoniae (strain ATCC 29342 / M129 / Subtype 1) (Mycoplasmoides pneumoniae).